The chain runs to 535 residues: EH domain-containing protein 3 (535 aa).

An N-acetylmethionine modification is found at M1. Residues 55-286 enclose the Dynamin-type G domain; the sequence is FDNKPMVLLV…DLFRDIQSLP (232 aa). The G1 motif stretch occupies residues 65-72; sequence GQYSTGKT. 65 to 72 contacts ATP; the sequence is GQYSTGKT. The tract at residues 91–92 is G2 motif; that stretch reads EP. Residues 153 to 156 are G3 motif; it reads DTPG. The stretch at 198–227 forms a coiled coil; that stretch reads DEFSEVIKALKNHEDKMRVVLNKADQIETQ. Residues 219–222 are G4 motif; the sequence is NKAD. K220 provides a ligand contact to ATP. Position 243 (I243) is a region of interest, G5 motif. Position 258 (W258) interacts with ATP. Residue K315 forms a Glycyl lysine isopeptide (Lys-Gly) (interchain with G-Cter in SUMO) linkage. 2 positions are modified to phosphoserine: S349 and S456. Residues 444 to 532 form the EH domain; the sequence is DKPMYDEIFY…AHLLPPSKRK (89 aa). An EF-hand domain is found at 476–511; the sequence is LPNSVLGKIWKLADIDKDGMLDDDEFALANHLIKVK. Residues D489, D491, D493, M495, and E500 each coordinate Ca(2+). K511 participates in a covalent cross-link: Glycyl lysine isopeptide (Lys-Gly) (interchain with G-Cter in SUMO).

The protein belongs to the TRAFAC class dynamin-like GTPase superfamily. Dynamin/Fzo/YdjA family. EHD subfamily. Homooligomer, and heterooligomer with EHD1, EHD2 and EHD4, ATP-binding is required for heterooligomerization. Interacts with PACSIN1. Interacts with PACSIN2. Interacts (via EH domain) with MICALL1. Interacts (via EH domain) with RAB11FIP2. Interacts with ANK2. Highly expressed in heart and brain and moderately expressed in kidney, liver, and placenta.

The protein resides in the recycling endosome membrane. It localises to the cell membrane. Its subcellular location is the cell projection. The protein localises to the cilium membrane. Its function is as follows. ATP- and membrane-binding protein that controls membrane reorganization/tubulation upon ATP hydrolysis. In vitro causes tubulation of endocytic membranes. Binding to phosphatidic acid induces its membrane tubulation activity. Plays a role in endocytic transport. Involved in early endosome to recycling endosome compartment (ERC), retrograde early endosome to Golgi, and endosome to plasma membrane (rapid recycling) protein transport. Involved in the regulation of Golgi maintenance and morphology. Involved in the recycling of internalized D1 dopamine receptor. Plays a role in cardiac protein trafficking probably implicating ANK2. Involved in the ventricular membrane targeting of SLC8A1 and CACNA1C and probably the atrial membrane localization of CACNA1GG and CACNA1H implicated in the regulation of atrial myocyte excitability and cardiac conduction. In conjunction with EHD4 may be involved in endocytic trafficking of KDR/VEGFR2 implicated in control of glomerular function. Involved in the rapid recycling of integrin beta-3 implicated in cell adhesion maintenance. Involved in the unidirectional retrograde dendritic transport of endocytosed BACE1 and in efficient sorting of BACE1 to axons implicating a function in neuronal APP processing. Plays a role in the formation of the ciliary vesicle, an early step in cilium biogenesis; possibly sharing redundant functions with EHD1. The sequence is that of EH domain-containing protein 3 from Homo sapiens (Human).